Consider the following 156-residue polypeptide: MALEKSLVLLPLLVLILLVLGWVQPSLGKESRAKKFQRQHMDSDSSPSSNSTYCNQMMRRRNMTQGRCKPVNTFVHEPLVDVQNVCFQEKVTCKNGQGNCYKSNSSMHITDCRLTNGSRYPNCAYRTSPKERHIIVACEGNPYVPVHFDASVEDST.

Residues 1–28 (MALEKSLVLLPLLVLILLVLGWVQPSLG) form the signal peptide. The segment covering 33–43 (AKKFQRQHMDS) has biased composition (basic and acidic residues). The tract at residues 33–52 (AKKFQRQHMDSDSSPSSNST) is disordered. Substrate contacts are provided by Lys35 and Arg38. The Proton acceptor role is filled by His40. N-linked (GlcNAc...) asparagine glycosylation is found at Asn50 and Asn62. Cystine bridges form between Cys54-Cys112, Cys68-Cys123, Cys86-Cys138, and Cys93-Cys100. Substrate-binding positions include 69-73 (KPVNT) and Lys94. Residue Asn104 is glycosylated (N-linked (GlcNAc...) asparagine). Arg113 is a binding site for substrate. Asn116 is a glycosylation site (N-linked (GlcNAc...) asparagine). Residue His147 is the Proton donor of the active site.

Belongs to the pancreatic ribonuclease family. In terms of assembly, monomer. Interacts with and forms tight 1:1 complexes with RNH1. Dimerization of two such complexes may occur. Interaction with RNH1 inhibits this protein.

It localises to the secreted. The catalysed reaction is an [RNA] containing cytidine + H2O = an [RNA]-3'-cytidine-3'-phosphate + a 5'-hydroxy-ribonucleotide-3'-[RNA].. It catalyses the reaction an [RNA] containing uridine + H2O = an [RNA]-3'-uridine-3'-phosphate + a 5'-hydroxy-ribonucleotide-3'-[RNA].. Its function is as follows. Endonuclease that catalyzes the cleavage of RNA on the 3' side of pyrimidine nucleotides. Acts on single-stranded and double-stranded RNA. In Gorilla gorilla gorilla (Western lowland gorilla), this protein is Ribonuclease pancreatic (RNASE1).